The sequence spans 281 residues: Glycerol uptake facilitator protein (281 aa).

Residues 1–5 lie on the Cytoplasmic side of the membrane; the sequence is MSQTS. Residues 6–34 traverse the membrane as a helical segment; sequence TLKGQCIAEFLGTGLLIFFGVGCVAALKV. Residues 35–39 lie on the Periplasmic side of the membrane; the sequence is AGASF. Residues 40-60 form a helical membrane-spanning segment; the sequence is GQWEISVIWGLGVAMAIYLTA. The Cytoplasmic portion of the chain corresponds to 61–63; the sequence is GVS. The stretch at 64–67 is an intramembrane region; it reads GAHL. The short motif at 68–70 is the NPA 1 element; it reads NPA. Positions 68-78 form an intramembrane region, helical; it reads NPAVTIALWLF. Topologically, residues 79 to 84 are cytoplasmic; that stretch reads ACFDKR. Residues 85–108 form a helical membrane-spanning segment; sequence KVIPFIVSQVAGAFCAAALVYGLY. Residues 109 to 143 lie on the Periplasmic side of the membrane; sequence YNLFFDFEQTHHIVRGSVESVDLAGTFSTYPNPHI. A helical membrane pass occupies residues 144–169; the sequence is NFVQAFAVEMVITAILMGLILALTDD. The Cytoplasmic segment spans residues 170 to 177; that stretch reads GNGVPRGP. Residues 178 to 194 form a helical membrane-spanning segment; sequence LAPLLIGLLIAVIGASM. At 195–198 the chain is on the periplasmic side; it reads GPLT. Residues 199–202 lie within the membrane without spanning it; it reads GFAM. The NPA 2 motif lies at 203–205; that stretch reads NPA. Residues 203 to 216 constitute an intramembrane region (helical); it reads NPARDFGPKVFAWL. Residues 217–231 lie on the Periplasmic side of the membrane; that stretch reads AGWGNVAFTGGRDIP. The helical transmembrane segment at 232–254 threads the bilayer; the sequence is YFLVPLFSPIVGAIVGAFAYRKL. Over 255-281 the chain is Cytoplasmic; it reads IGRHLPCDICVVEEKETTTPSEQKASL.

Belongs to the MIP/aquaporin (TC 1.A.8) family. In terms of assembly, homotetramer.

The protein resides in the cell inner membrane. The catalysed reaction is glycerol(in) = glycerol(out). Functionally, mediates glycerol diffusion across the cytoplasmic membrane via a pore-type mechanism. This is Glycerol uptake facilitator protein (glpF) from Shigella flexneri.